The chain runs to 75 residues: CDC42 small effector protein 1 (75 aa).

Residues C10 and C11 are each lipidated (S-palmitoyl cysteine). The CRIB domain occupies 30–43 (IGEPTNFVHLTHIG). A disordered region spans residues 45 to 75 (GEMADGMQPSGPIKEQMRSKVPHANGRNSLL).

This sequence belongs to the CDC42SE/SPEC family.

The protein resides in the cytoplasm. The protein localises to the cytoskeleton. Its subcellular location is the cell membrane. Its function is as follows. Probably involved in the organization of the actin cytoskeleton by acting downstream of CDC42, inducing actin filament assembly. In Danio rerio (Zebrafish), this protein is CDC42 small effector protein 1 (cdc42se1).